The following is a 325-amino-acid chain: GMP reductase (325 aa).

C174 (thioimidate intermediate) is an active-site residue. 203-226 is an NADP(+) binding site; that stretch reads LIADGGIRTHGDIAKSIRFGASMV.

This sequence belongs to the IMPDH/GMPR family. GuaC type 2 subfamily.

The enzyme catalyses IMP + NH4(+) + NADP(+) = GMP + NADPH + 2 H(+). Functionally, catalyzes the irreversible NADPH-dependent deamination of GMP to IMP. It functions in the conversion of nucleobase, nucleoside and nucleotide derivatives of G to A nucleotides, and in maintaining the intracellular balance of A and G nucleotides. The chain is GMP reductase from Staphylococcus aureus (strain MRSA252).